The sequence spans 536 residues: Caspase A (536 aa).

A propeptide spans 1–273 (MVLKTIEDNC…DSQSRMPRTD (273 aa)) (removed in mature form by autoprocessing). Residues histidine 364 and cysteine 406 contribute to the active site.

This sequence belongs to the peptidase C14A family. Heterodimer formed by the tight association of the large subunit p16 and the small subunit p14. Autocatalytic cleavage removes the propeptide and generates the two active subunits p16 and p14 in vitro. Cannot be cleaved by ced-3 in vitro. As to expression, isoform a: Expression is restricted to the late germline pachytene stage of meiosis I in both L4 larvae and adult hermaphrodite gonads. Isoform b: Expression is restricted to the late germline pachytene stage of meiosis I in both L4 larvae and adult hermaphrodite gonads.

It catalyses the reaction Strict requirement for an Asp residue at position P1 and has a preferred cleavage sequence of Tyr-Val-Ala-Asp-|-.. Its activity is regulated as follows. Inhibited by cysteine protease inhibitor iodoacetic acid (CH3COOI) but not by N-[N-(L-3-transcarboxirane-2-carbonyl)-leucyl]-agmatine (E-64) or benzyloxycarbonyl-DEVD-fluoro-methyl ketone (Z-DEVD-FMK). Functionally, cysteine protease which, in vitro, cleaves itself and caspase ced-3 into their mature active forms. Also cleaves, in vitro, inactive caspase csp-2 isoform b. Required maternally to induce apoptosis in a subset of cells fated to die during embryogenesis, mostly independently of the ced-9, ced-4 and ced-3 canonical apoptosis pathway. Involved in the degeneration of dopaminergic CEP neurons in response to high Mn(2+) levels. Dispensable for regulating apoptosis during embryogenesis. The sequence is that of Caspase A from Caenorhabditis elegans.